The sequence spans 346 residues: NADH-ubiquinone oxidoreductase chain 2 (346 aa).

11 helical membrane-spanning segments follow: residues 1–21 (MNPH…TITI), 25–45 (HWVL…PLIS), 60–80 (FLTQ…NAWA), 95–115 (CLLL…HFWF), 124–144 (LMTA…LLLM), 149–169 (LNPA…GWMG), 178–195 (ILAF…IILV), 200–219 (LALL…FMAL), 242–262 (ATLM…GFMP), 274–294 (EMTP…FFYL), and 326–346 (AILA…HAIV).

This sequence belongs to the complex I subunit 2 family.

It localises to the mitochondrion inner membrane. The enzyme catalyses a ubiquinone + NADH + 5 H(+)(in) = a ubiquinol + NAD(+) + 4 H(+)(out). In terms of biological role, core subunit of the mitochondrial membrane respiratory chain NADH dehydrogenase (Complex I) that is believed to belong to the minimal assembly required for catalysis. Complex I functions in the transfer of electrons from NADH to the respiratory chain. The immediate electron acceptor for the enzyme is believed to be ubiquinone. The polypeptide is NADH-ubiquinone oxidoreductase chain 2 (MT-ND2) (Sibirionetta formosa (Baikal teal)).